Consider the following 418-residue polypeptide: uncharacterized protein (418 aa).

This is an uncharacterized protein from Ictalurid herpesvirus 1 (strain Auburn) (IcHV-1).